A 592-amino-acid polypeptide reads, in one-letter code: Methionine--tRNA ligase (592 aa).

A 'HIGH' region motif is present at residues 12–22 (PYANGPFHVGH). The Zn(2+) site is built by Cys-144, Cys-147, Cys-157, and Cys-160. Residues 342–346 (KMSTS) carry the 'KMSKS' region motif. Position 345 (Thr-345) interacts with ATP.

The protein belongs to the class-I aminoacyl-tRNA synthetase family. MetG type 1 subfamily. As to quaternary structure, monomer. Zn(2+) serves as cofactor.

The protein localises to the cytoplasm. It carries out the reaction tRNA(Met) + L-methionine + ATP = L-methionyl-tRNA(Met) + AMP + diphosphate. Is required not only for elongation of protein synthesis but also for the initiation of all mRNA translation through initiator tRNA(fMet) aminoacylation. This is Methionine--tRNA ligase from Roseiflexus sp. (strain RS-1).